Consider the following 314-residue polypeptide: Protein EXORDIUM (314 aa).

Residues 1-21 form the signal peptide; the sequence is MYLLVFKLFLFLSLLQISVSA.

This sequence belongs to the EXORDIUM family. In terms of tissue distribution, expressed in root tips, vascular tissue of roots, shoot apex, rosette leaves and embryos.

It is found in the secreted. The protein resides in the extracellular space. It localises to the apoplast. Required for cell expansion in leaves. May mediate brassinosteroid (BR)-induced leaf growth. May play a role in the control of BR responses in roots. May be involved in signaling processes that coordinate BR responses with environmental or developmental signals. In Arabidopsis thaliana (Mouse-ear cress), this protein is Protein EXORDIUM (EXO).